We begin with the raw amino-acid sequence, 89 residues long: MSITAERKKAIVAEYANKVGDTGSPEVQVAVLSERIANLTNHFKFHKKDNHSRRGLLKMVSQRRRLLDYLKGIDQNRYQTLIKKLGLRR.

It belongs to the universal ribosomal protein uS15 family. In terms of assembly, part of the 30S ribosomal subunit. Forms a bridge to the 50S subunit in the 70S ribosome, contacting the 23S rRNA.

Its function is as follows. One of the primary rRNA binding proteins, it binds directly to 16S rRNA where it helps nucleate assembly of the platform of the 30S subunit by binding and bridging several RNA helices of the 16S rRNA. Functionally, forms an intersubunit bridge (bridge B4) with the 23S rRNA of the 50S subunit in the ribosome. The polypeptide is Small ribosomal subunit protein uS15 (Bartonella henselae (strain ATCC 49882 / DSM 28221 / CCUG 30454 / Houston 1) (Rochalimaea henselae)).